The sequence spans 314 residues: Aspartate carbamoyltransferase catalytic subunit (314 aa).

2 residues coordinate carbamoyl phosphate: R63 and T64. Position 91 (K91) interacts with L-aspartate. Positions 113, 143, and 146 each coordinate carbamoyl phosphate. R176 and R228 together coordinate L-aspartate. Residues A269 and P270 each contribute to the carbamoyl phosphate site.

It belongs to the aspartate/ornithine carbamoyltransferase superfamily. ATCase family. As to quaternary structure, heterododecamer (2C3:3R2) of six catalytic PyrB chains organized as two trimers (C3), and six regulatory PyrI chains organized as three dimers (R2).

It carries out the reaction carbamoyl phosphate + L-aspartate = N-carbamoyl-L-aspartate + phosphate + H(+). Its pathway is pyrimidine metabolism; UMP biosynthesis via de novo pathway; (S)-dihydroorotate from bicarbonate: step 2/3. Its function is as follows. Catalyzes the condensation of carbamoyl phosphate and aspartate to form carbamoyl aspartate and inorganic phosphate, the committed step in the de novo pyrimidine nucleotide biosynthesis pathway. This is Aspartate carbamoyltransferase catalytic subunit from Cutibacterium acnes (strain DSM 16379 / KPA171202) (Propionibacterium acnes).